Reading from the N-terminus, the 154-residue chain is Putative hydrogenase maturation protease MJ0253 (154 aa).

The protein belongs to the peptidase A31 family.

The chain is Putative hydrogenase maturation protease MJ0253 from Methanocaldococcus jannaschii (strain ATCC 43067 / DSM 2661 / JAL-1 / JCM 10045 / NBRC 100440) (Methanococcus jannaschii).